Consider the following 85-residue polypeptide: Beta-insect depressant toxin Lqh-dprIT3d (85 aa).

The first 21 residues, Met1–Ala21, serve as a signal peptide directing secretion. The LCN-type CS-alpha/beta domain maps to Asp22 to Gly82. Cystine bridges form between Cys31–Cys81, Cys35–Cys56, Cys42–Cys63, and Cys46–Cys65. Position 82 is a glycine amide (Gly82).

This sequence belongs to the long (4 C-C) scorpion toxin superfamily. Sodium channel inhibitor family. Beta subfamily. In terms of tissue distribution, expressed by the venom gland.

Its subcellular location is the secreted. In terms of biological role, depressant insect beta-toxins cause a transient contraction paralysis followed by a slow flaccid paralysis. They bind voltage-independently at site-4 of sodium channels (Nav) and block action potentials, primarily by depolarizing the axonal membrane and suppressing the sodium current. This depressant toxin is active only on insects. It is found in a relatively small amount in the venom, and its activity on insects is 10-fold higher compared to other known depressant toxins. The sequence is that of Beta-insect depressant toxin Lqh-dprIT3d from Leiurus hebraeus (Hebrew deathstalker scorpion).